Consider the following 74-residue polypeptide: RNA-binding protein Hfq (74 aa).

In terms of domain architecture, Sm spans Asp-9–Val-69.

The protein belongs to the Hfq family. As to quaternary structure, homohexamer.

RNA chaperone that binds small regulatory RNA (sRNAs) and mRNAs to facilitate mRNA translational regulation in response to envelope stress, environmental stress and changes in metabolite concentrations. Also binds with high specificity to tRNAs. The sequence is that of RNA-binding protein Hfq from Oceanobacillus iheyensis (strain DSM 14371 / CIP 107618 / JCM 11309 / KCTC 3954 / HTE831).